Here is a 533-residue protein sequence, read N- to C-terminus: Phosphatidylinositol 4-kinase gamma 8 (533 aa).

The PI3K/PI4K catalytic domain occupies 101-397 (GAQPLLLPSG…AVSGSDDDDD (297 aa)). The segment at 107 to 113 (LPSGLGG) is G-loop. Residues 108 to 114 (PSGLGGA), Lys129, and 210 to 213 (QRFV) contribute to the ATP site. The catalytic loop stretch occupies residues 243–251 (LNLDRHAGN). The activation loop stretch occupies residues 276-302 (PIDHGLCLPECLDDPYFEWLNWPQASV). Asp278 is a binding site for ATP.

It belongs to the PI3/PI4-kinase family. Type II PI4K subfamily.

It carries out the reaction a 1,2-diacyl-sn-glycero-3-phospho-(1D-myo-inositol) + ATP = a 1,2-diacyl-sn-glycero-3-phospho-(1D-myo-inositol 4-phosphate) + ADP + H(+). In terms of biological role, the phosphorylation of phosphatidylinositol (PI) to PI4P is the first committed step in the generation of phosphatidylinositol 4,5-bisphosphate (PIP2), a precursor of the second messenger inositol 1,4,5-trisphosphate (InsP3). This chain is Phosphatidylinositol 4-kinase gamma 8 (PI4KG8), found in Arabidopsis thaliana (Mouse-ear cress).